The chain runs to 513 residues: MEISWGRALWRNFLGQSPDWYKLALIIFLILNPLIFIISPFVAGWLLVAEFIFTLAMALKCYPLLPGGLLAIEAVFIGMTSAEHVREEVAANLEVLLLLMFMVAGIYFMKQLLLFIFTRLLLSIRSKMLLSLSFCMAAAFLSAFLDALTVVAVVISVAVGFYGIYHRVASSRTEDTDLQDDSHIDKHYKVVLEQFRGFLRSLMMHAGVGTALGGVMTMVGEPQNLIIAKAAGWHFGDFFLRMSPVTVPVLICGLLTCLLVEKLRCFGYGETLPEKVREVLQQFDDQSRHQRTRQDKIRLIVQAIIGVWLVTALALHLAEVGLIGLSVIILATSLTGVTDEHAIGKAFTESLPFTALLTVFFSVVAVIIDQQLFSPIIHFVLQASEHAQLSLFYIFNGLLSSISDNVFVGTIYINEAKAAMESGAITLKQYELLAVAINTGTNLPSVATPNGQAAFLFLLTSALAPLIRLSYGRMVWMALPYTLVLTLVGLLCVEFTLAPVTEWFMQMGWIATL.

11 helical membrane-spanning segments follow: residues 23 to 43 (LALIIFLILNPLIFIISPFVA), 52 to 72 (IFTLAMALKCYPLLPGGLLAI), 97 to 117 (LLLMFMVAGIYFMKQLLLFIF), 144 to 164 (FLDALTVVAVVISVAVGFYGI), 202 to 222 (LMMHAGVGTALGGVMTMVGEP), 238 to 258 (FFLRMSPVTVPVLICGLLTCL), 303 to 323 (AIIGVWLVTALALHLAEVGLI), 348 to 368 (TESLPFTALLTVFFSVVAVII), 391 to 411 (LFYIFNGLLSSISDNVFVGTI), 447 to 467 (ATPNGQAAFLFLLTSALAPLI), and 475 to 495 (VWMALPYTLVLTLVGLLCVEF).

The protein belongs to the NhaB Na(+)/H(+) (TC 2.A.34) antiporter family.

Its subcellular location is the cell inner membrane. It catalyses the reaction 2 Na(+)(in) + 3 H(+)(out) = 2 Na(+)(out) + 3 H(+)(in). Its function is as follows. Na(+)/H(+) antiporter that extrudes sodium in exchange for external protons. This chain is Na(+)/H(+) antiporter NhaB, found in Escherichia coli (strain SMS-3-5 / SECEC).